The primary structure comprises 420 residues: ATP phosphoribosyltransferase regulatory subunit (420 aa).

This sequence belongs to the class-II aminoacyl-tRNA synthetase family. HisZ subfamily. Heteromultimer composed of HisG and HisZ subunits.

It is found in the cytoplasm. It functions in the pathway amino-acid biosynthesis; L-histidine biosynthesis; L-histidine from 5-phospho-alpha-D-ribose 1-diphosphate: step 1/9. In terms of biological role, required for the first step of histidine biosynthesis. May allow the feedback regulation of ATP phosphoribosyltransferase activity by histidine. This is ATP phosphoribosyltransferase regulatory subunit from Bacillus anthracis (strain A0248).